A 542-amino-acid polypeptide reads, in one-letter code: Chaperonin GroEL 1 (542 aa).

Residues 29–32, 86–90, G414, 479–481, and D495 each bind ATP; these read TIGP, DGTTT, and DAL.

Belongs to the chaperonin (HSP60) family. Forms a cylinder of 14 subunits composed of two heptameric rings stacked back-to-back. Interacts with the co-chaperonin GroES.

It localises to the cytoplasm. The enzyme catalyses ATP + H2O + a folded polypeptide = ADP + phosphate + an unfolded polypeptide.. In terms of biological role, together with its co-chaperonin GroES, plays an essential role in assisting protein folding. The GroEL-GroES system forms a nano-cage that allows encapsulation of the non-native substrate proteins and provides a physical environment optimized to promote and accelerate protein folding. This chain is Chaperonin GroEL 1, found in Synechococcus sp. (strain JA-3-3Ab) (Cyanobacteria bacterium Yellowstone A-Prime).